The primary structure comprises 91 residues: DNA-directed RNA polymerase subunit omega (91 aa).

The protein belongs to the RNA polymerase subunit omega family. As to quaternary structure, the RNAP catalytic core consists of 2 alpha, 1 beta, 1 beta' and 1 omega subunit. When a sigma factor is associated with the core the holoenzyme is formed, which can initiate transcription.

The enzyme catalyses RNA(n) + a ribonucleoside 5'-triphosphate = RNA(n+1) + diphosphate. Its function is as follows. Promotes RNA polymerase assembly. Latches the N- and C-terminal regions of the beta' subunit thereby facilitating its interaction with the beta and alpha subunits. The chain is DNA-directed RNA polymerase subunit omega from Pectobacterium carotovorum subsp. carotovorum (strain PC1).